A 324-amino-acid chain; its full sequence is uncharacterized protein (324 aa).

Positions 1–11 (MNTNINVNGSN) are enriched in polar residues. Disordered stretches follow at residues 1 to 77 (MNTN…YSYS), 132 to 194 (NNHY…NNNN), and 272 to 324 (DENI…DNDS). The segment covering 21-64 (NENNNNNNGRNNNTNNNNNGRYNNNNNNNNNNNNNNYNLNMNST) has biased composition (low complexity). The span at 279 to 324 (SNNNNNNNNNNNNSYNVNICRNNSNFNVNENNGGDNNNDNNNDNDS) shows a compositional bias: low complexity.

This is an uncharacterized protein from Dictyostelium discoideum (Social amoeba).